The chain runs to 208 residues: Small ribosomal subunit protein uS4 (208 aa).

In terms of domain architecture, S4 RNA-binding spans 97-160 (TRLDNVCYRM…QKQLRVQEAL (64 aa)).

It belongs to the universal ribosomal protein uS4 family. Part of the 30S ribosomal subunit. Contacts protein S5. The interaction surface between S4 and S5 is involved in control of translational fidelity.

One of the primary rRNA binding proteins, it binds directly to 16S rRNA where it nucleates assembly of the body of the 30S subunit. Its function is as follows. With S5 and S12 plays an important role in translational accuracy. The sequence is that of Small ribosomal subunit protein uS4 from Xanthomonas oryzae pv. oryzae (strain MAFF 311018).